Consider the following 325-residue polypeptide: Ribosomal RNA small subunit methyltransferase C (325 aa).

It belongs to the methyltransferase superfamily. RsmC family. In terms of assembly, monomer.

It is found in the cytoplasm. It catalyses the reaction guanosine(1207) in 16S rRNA + S-adenosyl-L-methionine = N(2)-methylguanosine(1207) in 16S rRNA + S-adenosyl-L-homocysteine + H(+). Functionally, specifically methylates the guanine in position 1207 of 16S rRNA in the 30S particle. This Alcanivorax borkumensis (strain ATCC 700651 / DSM 11573 / NCIMB 13689 / SK2) protein is Ribosomal RNA small subunit methyltransferase C.